Consider the following 363-residue polypeptide: Ribosome-binding ATPase YchF (363 aa).

The OBG-type G domain occupies 3–256; the sequence is FKCGIVGLPN…LDDDEKIEFL (254 aa). 12-17 contacts ATP; sequence NVGKST. Positions 16 and 36 each coordinate Mg(2+). The TGS domain maps to 278-361; it reads NLQTYFTAGV…QDGDVMHFRF (84 aa).

It belongs to the TRAFAC class OBG-HflX-like GTPase superfamily. OBG GTPase family. YchF/OLA1 subfamily. Requires Mg(2+) as cofactor.

ATPase that binds to both the 70S ribosome and the 50S ribosomal subunit in a nucleotide-independent manner. This Pasteurella multocida (strain Pm70) protein is Ribosome-binding ATPase YchF.